The sequence spans 148 residues: Transcriptional repressor NrdR (148 aa).

A zinc finger spans residues 3-32 (CPKCSSEESKVVDSRQAEDAIRRRRVCESC). Positions 47-137 (LLVIKKDDKR…VYRSFKDVSE (91 aa)) constitute an ATP-cone domain.

It belongs to the NrdR family. Zn(2+) serves as cofactor.

Negatively regulates transcription of bacterial ribonucleotide reductase nrd genes and operons by binding to NrdR-boxes. The protein is Transcriptional repressor NrdR of Lactococcus lactis subsp. lactis (strain IL1403) (Streptococcus lactis).